Consider the following 367-residue polypeptide: Dihydroorotate dehydrogenase (quinone) (367 aa).

FMN contacts are provided by residues 67–71 (AGFDK) and Thr-91. Substrate is bound at residue Lys-71. Residue 116-120 (NRLGF) coordinates substrate. The FMN site is built by Asn-145 and Asn-178. Asn-178 is a substrate binding site. Ser-181 serves as the catalytic Nucleophile. Asn-183 contacts substrate. FMN is bound by residues Lys-219 and Thr-247. 248 to 249 (NT) contacts substrate. FMN is bound by residues Gly-269, Gly-298, and 319 to 320 (YT).

It belongs to the dihydroorotate dehydrogenase family. Type 2 subfamily. In terms of assembly, monomer. The cofactor is FMN.

Its subcellular location is the cell membrane. It catalyses the reaction (S)-dihydroorotate + a quinone = orotate + a quinol. Its pathway is pyrimidine metabolism; UMP biosynthesis via de novo pathway; orotate from (S)-dihydroorotate (quinone route): step 1/1. In terms of biological role, catalyzes the conversion of dihydroorotate to orotate with quinone as electron acceptor. The chain is Dihydroorotate dehydrogenase (quinone) from Roseiflexus castenholzii (strain DSM 13941 / HLO8).